We begin with the raw amino-acid sequence, 212 residues long: Phosphoribosylglycinamide formyltransferase (212 aa).

Residue 11 to 13 participates in N(1)-(5-phospho-beta-D-ribosyl)glycinamide binding; it reads GSN. (6R)-10-formyltetrahydrofolate-binding positions include Arg-64, 89–92, and Asn-106; that span reads MRIL. Residue His-108 is the Proton donor of the active site. 140-144 serves as a coordination point for (6R)-10-formyltetrahydrofolate; that stretch reads TDELD. Residue 170–173 participates in N(1)-(5-phospho-beta-D-ribosyl)glycinamide binding; it reads QTQE.

It belongs to the GART family. As to quaternary structure, monomer. Homodimer below pH 6.8.

The catalysed reaction is N(1)-(5-phospho-beta-D-ribosyl)glycinamide + (6R)-10-formyltetrahydrofolate = N(2)-formyl-N(1)-(5-phospho-beta-D-ribosyl)glycinamide + (6S)-5,6,7,8-tetrahydrofolate + H(+). It functions in the pathway purine metabolism; IMP biosynthesis via de novo pathway; N(2)-formyl-N(1)-(5-phospho-D-ribosyl)glycinamide from N(1)-(5-phospho-D-ribosyl)glycinamide (10-formyl THF route): step 1/1. Its activity is regulated as follows. Inhibited by N10-(bromoacetyl)-5,8-dideazafolate. In terms of biological role, catalyzes the transfer of a formyl group from 10-formyltetrahydrofolate to 5-phospho-ribosyl-glycinamide (GAR), producing 5-phospho-ribosyl-N-formylglycinamide (FGAR) and tetrahydrofolate. The protein is Phosphoribosylglycinamide formyltransferase of Escherichia coli (strain K12).